We begin with the raw amino-acid sequence, 201 residues long: Holliday junction branch migration complex subunit RuvA (201 aa).

A domain I region spans residues 1-64; sequence MYEYIKGKYI…QDFIGLYGFL (64 aa). A domain II region spans residues 65-143; that stretch reads TKDELEMFNK…STDISKGNSE (79 aa). The interval 144–154 is flexible linker; sequence INNLDVDYDEH. The interval 154-201 is domain III; it reads HSKKLEEVRFALNSLGYSEKETDRAINNVDKSEGIENIIKSCLRFLMN.

This sequence belongs to the RuvA family. As to quaternary structure, homotetramer. Forms an RuvA(8)-RuvB(12)-Holliday junction (HJ) complex. HJ DNA is sandwiched between 2 RuvA tetramers; dsDNA enters through RuvA and exits via RuvB. An RuvB hexamer assembles on each DNA strand where it exits the tetramer. Each RuvB hexamer is contacted by two RuvA subunits (via domain III) on 2 adjacent RuvB subunits; this complex drives branch migration. In the full resolvosome a probable DNA-RuvA(4)-RuvB(12)-RuvC(2) complex forms which resolves the HJ.

Its subcellular location is the cytoplasm. Its function is as follows. The RuvA-RuvB-RuvC complex processes Holliday junction (HJ) DNA during genetic recombination and DNA repair, while the RuvA-RuvB complex plays an important role in the rescue of blocked DNA replication forks via replication fork reversal (RFR). RuvA specifically binds to HJ cruciform DNA, conferring on it an open structure. The RuvB hexamer acts as an ATP-dependent pump, pulling dsDNA into and through the RuvAB complex. HJ branch migration allows RuvC to scan DNA until it finds its consensus sequence, where it cleaves and resolves the cruciform DNA. This Clostridium acetobutylicum (strain ATCC 824 / DSM 792 / JCM 1419 / IAM 19013 / LMG 5710 / NBRC 13948 / NRRL B-527 / VKM B-1787 / 2291 / W) protein is Holliday junction branch migration complex subunit RuvA.